Here is a 619-residue protein sequence, read N- to C-terminus: Pescadillo homolog (619 aa).

Residues 303 to 324 are disordered; it reads ADKDQKDQDTIEDAEEVTEPTV. A compositionally biased stretch (acidic residues) spans 312–324; that stretch reads TIEDAEEVTEPTV. The 100-residue stretch at 353 to 452 folds into the BRCT domain; sequence PTSQLFSKFI…ELVSVGDYAP (100 aa). A disordered region spans residues 456–567; it reads LPPHLSPWGD…STKAALTPEE (112 aa). 2 coiled-coil regions span residues 472 to 560 and 588 to 619; these read NAKA…ASTK and MQYG…LKDV. Residues 480-522 show a composition bias toward acidic residues; sequence EAEEEEEEEEEDEEEEEEEEEIEVADGDEDQDDEEEEEIEDED. Basic and acidic residues predominate over residues 523–539; it reads LKAQKELEMEVAGKKFS.

The protein belongs to the pescadillo family. In terms of assembly, component of the NOP7 complex, composed of ERB1, NOP7 and YTM1. The complex is held together by ERB1, which interacts with NOP7 via its N-terminal domain and with YTM1 via a high-affinity interaction between the seven-bladed beta-propeller domains of the 2 proteins. The NOP7 complex associates with the 66S pre-ribosome.

Its subcellular location is the nucleus. It is found in the nucleolus. The protein resides in the nucleoplasm. Its function is as follows. Component of the NOP7 complex, which is required for maturation of the 25S and 5.8S ribosomal RNAs and formation of the 60S ribosome. The chain is Pescadillo homolog from Lodderomyces elongisporus (strain ATCC 11503 / CBS 2605 / JCM 1781 / NBRC 1676 / NRRL YB-4239) (Yeast).